The chain runs to 351 residues: Dysbindin (351 aa).

Ser-11 carries the post-translational modification Phosphoserine. Residues 88–181 are a coiled coil; sequence EKKKTSLVEL…ELDAEHAQKV (94 aa). The interval 173–331 is dysbindin; the sequence is LDAEHAQKVL…DEEEVQVDTA (159 aa). Residues 243 to 256 carry the Nuclear export signal motif; that stretch reads LMDISDQEALDVFL. The interval 286–351 is disordered; sequence PNPSELRAKP…TPDGGEDSDS (66 aa). Polar residues predominate over residues 296 to 305; it reads PSSSSTCTDS. Ser-316, Ser-321, and Ser-349 each carry phosphoserine.

The protein belongs to the dysbindin family. As to quaternary structure, interacts (via its coiled coil domain) with KXD1. Interacts with CMYA5, PI4K2 and RNF151. Component of the biogenesis of lysosome-related organelles complex 1 (BLOC-1) composed of at least BLOC1S1, BLOC1S2, BLOC1S3, BLOC1S4, BLOC1S5, BLOC1S6, DTNBP1/BLOC1S7 and SNAPIN/BLOC1S8. Interacts directly in the complex with BLOC1S5, BLOC1S6 and SNAPIN/BLOC1S8. The BLOC-1 complex associates with the AP-3 protein complex and membrane protein cargos. This BLOC-1 complex also associates with the BLOC-2 complex in endosomes. Binds to DTNA and DTNB but may not be a physiological binding partner. Interacts (isoform 1 and isoform 2 only) with the DNA-dependent protein kinase complex DNA-PK; the interaction phosphorylates DTNBP1 in vitro. Interacts directly in this complex with XRCC5 and XRCC6. Interacts with AP3M1, AP3B2 and TRIM32. Interacts with XPO1; the interaction exports DTNBP1 out of the nucleus. In terms of processing, ubiquitinated by TRIM32. Ubiquitination leads to DTNBP1 degradation. Post-translationally, isoforms 1 and 2 highly phosphorylated by PRKDC in vitro. Isoform 3 only weakly phosphorylated by PRKDC in vitro. Detected in brain, in neurons and in neuropil. Isoform 1 is expressed in the cerebral cortex, and hippocampal frontal (HF). Specific expression in the posterior half of the superior temporal gyrus (pSTG). Higher expression of isoform 2 and 3 in the HF than in the pSTG while isoform 1 shows no difference in expression in these areas. In the HF, detected in dentate gyrus (DG) and in pyramidal cells of hippocampus CA2 and CA3 (at protein level). Expressed in all principal neuronal populations of the HF, namely pyramidal neurons in the subiculum and CA1-3, granule cells in the dense cell layer of the DG (DGg), and polymorph cells in the hilus of the DG (DGh). Maximal levels in CA2, CA3, and DGh. Isoform 2 not expressed in the cerebral cortex.

It is found in the cytoplasm. The protein resides in the cytoplasmic vesicle membrane. It localises to the endosome membrane. Its subcellular location is the melanosome membrane. The protein localises to the postsynaptic density. It is found in the endoplasmic reticulum. The protein resides in the nucleus. It localises to the cytoplasmic vesicle. Its subcellular location is the secretory vesicle. The protein localises to the synaptic vesicle membrane. It is found in the postsynaptic cell membrane. Component of the BLOC-1 complex, a complex that is required for normal biogenesis of lysosome-related organelles (LRO), such as platelet dense granules and melanosomes. In concert with the AP-3 complex, the BLOC-1 complex is required to target membrane protein cargos into vesicles assembled at cell bodies for delivery into neurites and nerve terminals. The BLOC-1 complex, in association with SNARE proteins, is also proposed to be involved in neurite extension. Associates with the BLOC-2 complex to facilitate the transport of TYRP1 independent of AP-3 function. Plays a role in synaptic vesicle trafficking and in neurotransmitter release. Plays a role in the regulation of cell surface exposure of DRD2. May play a role in actin cytoskeleton reorganization and neurite outgrowth. May modulate MAPK8 phosphorylation. Appears to promote neuronal transmission and viability through regulating the expression of SNAP25 and SYN1, modulating PI3-kinase-Akt signaling and influencing glutamatergic release. Regulates the expression of SYN1 through binding to its promoter. Modulates prefrontal cortical activity via the dopamine/D2 pathway. The protein is Dysbindin (DTNBP1) of Homo sapiens (Human).